A 312-amino-acid chain; its full sequence is Elongation factor Ts (312 aa).

Positions 84 to 87 (TDFV) are involved in Mg(2+) ion dislocation from EF-Tu.

This sequence belongs to the EF-Ts family.

The protein resides in the cytoplasm. Functionally, associates with the EF-Tu.GDP complex and induces the exchange of GDP to GTP. It remains bound to the aminoacyl-tRNA.EF-Tu.GTP complex up to the GTP hydrolysis stage on the ribosome. The sequence is that of Elongation factor Ts from Caulobacter vibrioides (strain ATCC 19089 / CIP 103742 / CB 15) (Caulobacter crescentus).